The following is a 753-amino-acid chain: 5-methyltetrahydropteroyltriglutamate--homocysteine methyltransferase (753 aa).

Residues 17–20 (RELK) and Lys-117 contribute to the 5-methyltetrahydropteroyltri-L-glutamate site. Residues 431–433 (IGS) and Glu-484 contribute to the L-homocysteine site. L-methionine is bound by residues 431-433 (IGS) and Glu-484. 5-methyltetrahydropteroyltri-L-glutamate contacts are provided by residues 515–516 (RC) and Trp-561. An L-homocysteine-binding site is contributed by Asp-599. Asp-599 serves as a coordination point for L-methionine. Residue Glu-605 participates in 5-methyltetrahydropteroyltri-L-glutamate binding. The Zn(2+) site is built by His-641, Cys-643, and Glu-665. Residue His-694 is the Proton donor of the active site. Cys-726 is a binding site for Zn(2+).

This sequence belongs to the vitamin-B12 independent methionine synthase family. In terms of assembly, monomer. Zn(2+) serves as cofactor.

The enzyme catalyses 5-methyltetrahydropteroyltri-L-glutamate + L-homocysteine = tetrahydropteroyltri-L-glutamate + L-methionine. It participates in amino-acid biosynthesis; L-methionine biosynthesis via de novo pathway; L-methionine from L-homocysteine (MetE route): step 1/1. Functionally, catalyzes the transfer of a methyl group from 5-methyltetrahydrofolate to homocysteine resulting in methionine formation. The sequence is that of 5-methyltetrahydropteroyltriglutamate--homocysteine methyltransferase from Escherichia coli (strain K12).